The sequence spans 267 residues: Undecaprenyl-diphosphatase (267 aa).

8 helical membrane passes run 1 to 21 (MSYF…FLPI), 39 to 59 (QGLA…VLYF), 83 to 103 (AKLA…GFVM), 111 to 131 (LRSA…LWYV), 149 to 169 (ALFI…RSGA), 189 to 209 (FLMS…KLVT), 218 to 238 (FLLT…HFFL), and 245 to 265 (GMTP…AFLL).

Belongs to the UppP family.

It is found in the cell inner membrane. It carries out the reaction di-trans,octa-cis-undecaprenyl diphosphate + H2O = di-trans,octa-cis-undecaprenyl phosphate + phosphate + H(+). In terms of biological role, catalyzes the dephosphorylation of undecaprenyl diphosphate (UPP). Confers resistance to bacitracin. This Vibrio cholerae serotype O1 (strain ATCC 39315 / El Tor Inaba N16961) protein is Undecaprenyl-diphosphatase.